The sequence spans 336 residues: Fructose-1,6-bisphosphatase class 1 (336 aa).

4 residues coordinate Mg(2+): glutamate 90, aspartate 112, leucine 114, and aspartate 115. Substrate-binding positions include 115–118, asparagine 211, and lysine 277; that span reads DGSS. Glutamate 283 is a binding site for Mg(2+).

Belongs to the FBPase class 1 family. In terms of assembly, homotetramer. It depends on Mg(2+) as a cofactor.

It is found in the cytoplasm. The catalysed reaction is beta-D-fructose 1,6-bisphosphate + H2O = beta-D-fructose 6-phosphate + phosphate. It functions in the pathway carbohydrate biosynthesis; gluconeogenesis. This is Fructose-1,6-bisphosphatase class 1 from Pseudomonas paraeruginosa (strain DSM 24068 / PA7) (Pseudomonas aeruginosa (strain PA7)).